The sequence spans 393 residues: Dual specificity mitogen-activated protein kinase kinase 1 (393 aa).

The interval 1 to 27 (MPKKKPTPIQLNPAPDGSAVNGTSSAE) is disordered. Residues 68-361 (FEKISELGAG…LKQLMVHAFI (294 aa)) enclose the Protein kinase domain. ATP-binding positions include 74–82 (LGAGNGGVV) and K97. D190 functions as the Proton acceptor in the catalytic mechanism. A phosphoserine; by RAF mark is found at S218 and S222. The segment at 270–307 (ELELLFGCHVEGDAAETPPRPRTPGRPLSSYGMDSRPP) is RAF1-binding. The residue at position 286 (T286) is a Phosphothreonine. The residue at position 292 (T292) is a Phosphothreonine; by MAPK1. A Phosphoserine; by PAK modification is found at S298.

It belongs to the protein kinase superfamily. STE Ser/Thr protein kinase family. MAP kinase kinase subfamily. Found in a complex with at least BRAF, HRAS, MAP2K1, MAPK3/ERK1 and RGS14. Forms a heterodimer with MAP2K2/MEK2. Forms heterodimers with KSR2 which further dimerize to form tetramers. Interacts with KSR1 or KSR2 and BRAF; the interaction with KSR1 or KSR2 mediates KSR1-BRAF or KSR2-BRAF dimerization. Interacts with ARBB2, LAMTOR3, MAPK1/ERK2 and RAF1. Interacts with MAPK1/ERK2. Interacts with MORG1. Interacts with PPARG. Interacts with SGK1. Interacts with BIRC6/bruce. Interacts with KAT7; the interaction promotes KAT7 phosphorylation. Interacts with RAF1 and NEK10; the interaction is required for ERK1/2-signaling pathway activation in response to UV irradiation. Interacts with TRAF3IP3. Interacts with MOS. In terms of processing, phosphorylation at Ser-218 and Ser-222 by MAP kinase kinase kinases (BRAF or MEKK1) positively regulates kinase activity. Also phosphorylated at Thr-292 by MAPK1/ERK2 and at Ser-298 by PAK. MAPK1/ERK2 phosphorylation of Thr-292 occurs in response to cellular adhesion and leads to inhibition of Ser-298 phosphorylation by PAK. Autophosphorylated at Ser-218 and Ser-222, autophosphosphorylation is promoted by NEK10 following UV irradiation.

It localises to the cytoplasm. It is found in the cytoskeleton. The protein localises to the microtubule organizing center. Its subcellular location is the centrosome. The protein resides in the spindle pole body. It localises to the nucleus. It is found in the membrane. It carries out the reaction L-seryl-[protein] + ATP = O-phospho-L-seryl-[protein] + ADP + H(+). The catalysed reaction is L-threonyl-[protein] + ATP = O-phospho-L-threonyl-[protein] + ADP + H(+). The enzyme catalyses L-tyrosyl-[protein] + ATP = O-phospho-L-tyrosyl-[protein] + ADP + H(+). Ras proteins such as HRAS mediate the activation of RAF proteins such as RAF1 or BRAF which in turn activate extracellular signal-regulated kinases (ERK) through MAPK (mitogen-activated protein kinases) and ERK kinases MAP2K1/MEK1 and MAP2K2/MEK2. Activation occurs through phosphorylation of Ser-218 and Ser-222. MAP2K1/MEK1 binds KSR1 or KSR2 releasing the inhibitory intramolecular interaction between KSR1 or KSR2 protein kinase and N-terminal domains. This allows KSR1 or KSR2 dimerization with BRAF leading to BRAF activation and phosphorylation of MAP2K1. MAP2K1/MEK1 is also the target of negative feed-back regulation by its substrate kinases, such as MAPK1/ERK2. These phosphorylate MAP2K1/MEK1 on Thr-292, thereby facilitating dephosphorylation of the activating residues Ser-218 and Ser-222. Inhibited by serine/threonine phosphatase 2A. Functionally, dual specificity protein kinase which acts as an essential component of the MAP kinase signal transduction pathway. Binding of extracellular ligands such as growth factors, cytokines and hormones to their cell-surface receptors activates RAS and this initiates RAF1 activation. RAF1 then further activates the dual-specificity protein kinases MAP2K1/MEK1 and MAP2K2/MEK2. Both MAP2K1/MEK1 and MAP2K2/MEK2 function specifically in the MAPK/ERK cascade, and catalyze the concomitant phosphorylation of a threonine and a tyrosine residue in a Thr-Glu-Tyr sequence located in the extracellular signal-regulated kinases MAPK3/ERK1 and MAPK1/ERK2, leading to their activation and further transduction of the signal within the MAPK/ERK cascade. Activates BRAF in a KSR1 or KSR2-dependent manner; by binding to KSR1 or KSR2 releases the inhibitory intramolecular interaction between KSR1 or KSR2 protein kinase and N-terminal domains which promotes KSR1 or KSR2-BRAF dimerization and BRAF activation. Depending on the cellular context, this pathway mediates diverse biological functions such as cell growth, adhesion, survival and differentiation, predominantly through the regulation of transcription, metabolism and cytoskeletal rearrangements. One target of the MAPK/ERK cascade is peroxisome proliferator-activated receptor gamma (PPARG), a nuclear receptor that promotes differentiation and apoptosis. MAP2K1/MEK1 has been shown to export PPARG from the nucleus. The MAPK/ERK cascade is also involved in the regulation of endosomal dynamics, including lysosome processing and endosome cycling through the perinuclear recycling compartment (PNRC), as well as in the fragmentation of the Golgi apparatus during mitosis. This chain is Dual specificity mitogen-activated protein kinase kinase 1 (Map2k1), found in Mus musculus (Mouse).